The chain runs to 221 residues: Sigma non-opioid intracellular receptor 1 (221 aa).

Residues 1–4 lie on the Lumenal side of the membrane; the sequence is MALW. A helical membrane pass occupies residues 5-27; the sequence is RGLRAVLAVAGLAVAVQLLRGWL. The Cytoplasmic segment spans residues 28-221; sequence GSKSYVFNRE…STHLSELGFF (194 aa). Residues 96–103 form an important for ligand-binding region; sequence SLTEYVLL. A C-terminal hydrophobic region region spans residues 174 to 221; that stretch reads FIPSTLGFALADTIFSTQDFLTLFYTVKVYGKALLLETSTHLSELGFF.

The protein belongs to the ERG2 family. As to quaternary structure, homotrimer.

The protein resides in the nucleus inner membrane. The protein localises to the nucleus outer membrane. It localises to the nucleus envelope. Its subcellular location is the cytoplasmic vesicle. It is found in the endoplasmic reticulum membrane. The protein resides in the membrane. May function in lipid transport from the endoplasmic reticulum and be involved in a wide array of cellular functions probably through regulation of the biogenesis of lipid microdomains at the plasma membrane. May regulate calcium efflux at the endoplasmic reticulum. The polypeptide is Sigma non-opioid intracellular receptor 1 (sigmar1) (Xenopus tropicalis (Western clawed frog)).